The following is a 256-amino-acid chain: Ribosomal RNA small subunit methyltransferase J (256 aa).

Residues 104–105 (RD), 120–121 (ER), 156–157 (SS), and D174 each bind S-adenosyl-L-methionine.

This sequence belongs to the methyltransferase superfamily. RsmJ family.

The protein resides in the cytoplasm. It catalyses the reaction guanosine(1516) in 16S rRNA + S-adenosyl-L-methionine = N(2)-methylguanosine(1516) in 16S rRNA + S-adenosyl-L-homocysteine + H(+). In terms of biological role, specifically methylates the guanosine in position 1516 of 16S rRNA. In Yersinia pseudotuberculosis serotype O:1b (strain IP 31758), this protein is Ribosomal RNA small subunit methyltransferase J.